We begin with the raw amino-acid sequence, 181 residues long: UPF0215 protein AF_1433 (181 aa).

This sequence belongs to the UPF0215 family.

This Archaeoglobus fulgidus (strain ATCC 49558 / DSM 4304 / JCM 9628 / NBRC 100126 / VC-16) protein is UPF0215 protein AF_1433.